Consider the following 372-residue polypeptide: NAD(P)H-quinone oxidoreductase subunit 1 (372 aa).

The next 9 helical transmembrane spans lie at 27–47 (LLWLPLPMLMMLIVATVGVLV), 65–85 (PEYIGPLGILAPLADGLKLIF), 97–117 (WLFTLGPAVVVIPVFLSYIIV), 128–148 (LAMGVFLWIALSSIAPIGLLM), 176–196 (LALAVLAVAMMSNGLGTVEIV), 204–224 (ILSWNVWRQPIGFLVFWIAAL), 254–274 (FALFYLGAYVNLVLSALLVSV), 308–328 (VLGITMTLIKAYFFVFLAILL), and 347–367 (FLLPVGLVNLLLTAGLKLAFP).

Belongs to the complex I subunit 1 family. As to quaternary structure, NDH-1 is composed of at least 11 different subunits.

Its subcellular location is the cellular thylakoid membrane. It carries out the reaction a plastoquinone + NADH + (n+1) H(+)(in) = a plastoquinol + NAD(+) + n H(+)(out). The enzyme catalyses a plastoquinone + NADPH + (n+1) H(+)(in) = a plastoquinol + NADP(+) + n H(+)(out). Its function is as follows. NDH-1 shuttles electrons from an unknown electron donor, via FMN and iron-sulfur (Fe-S) centers, to quinones in the respiratory and/or the photosynthetic chain. The immediate electron acceptor for the enzyme in this species is believed to be plastoquinone. Couples the redox reaction to proton translocation, and thus conserves the redox energy in a proton gradient. The polypeptide is NAD(P)H-quinone oxidoreductase subunit 1 (Thermosynechococcus vestitus (strain NIES-2133 / IAM M-273 / BP-1)).